The chain runs to 90 residues: uncharacterized protein (90 aa).

This is an uncharacterized protein from Archaeoglobus fulgidus (strain ATCC 49558 / DSM 4304 / JCM 9628 / NBRC 100126 / VC-16).